The sequence spans 466 residues: Glutamate--tRNA ligase (466 aa).

A 'HIGH' region motif is present at residues 9–19 (PSPTGDLHVGS). The 'KMSKS' region signature appears at 237–241 (KLSKR). Residue lysine 240 participates in ATP binding.

This sequence belongs to the class-I aminoacyl-tRNA synthetase family. Glutamate--tRNA ligase type 1 subfamily. Monomer.

It localises to the cytoplasm. It catalyses the reaction tRNA(Glu) + L-glutamate + ATP = L-glutamyl-tRNA(Glu) + AMP + diphosphate. Functionally, catalyzes the attachment of glutamate to tRNA(Glu) in a two-step reaction: glutamate is first activated by ATP to form Glu-AMP and then transferred to the acceptor end of tRNA(Glu). The chain is Glutamate--tRNA ligase from Baumannia cicadellinicola subsp. Homalodisca coagulata.